We begin with the raw amino-acid sequence, 207 residues long: dTTP/UTP pyrophosphatase (207 aa).

The active-site Proton acceptor is the D79.

Belongs to the Maf family. YhdE subfamily. A divalent metal cation serves as cofactor.

The protein resides in the cytoplasm. It catalyses the reaction dTTP + H2O = dTMP + diphosphate + H(+). The catalysed reaction is UTP + H2O = UMP + diphosphate + H(+). Functionally, nucleoside triphosphate pyrophosphatase that hydrolyzes dTTP and UTP. May have a dual role in cell division arrest and in preventing the incorporation of modified nucleotides into cellular nucleic acids. The sequence is that of dTTP/UTP pyrophosphatase from Nitrobacter winogradskyi (strain ATCC 25391 / DSM 10237 / CIP 104748 / NCIMB 11846 / Nb-255).